The chain runs to 428 residues: 2,3-bisphosphoglycerate-independent phosphoglycerate mutase 2 (428 aa).

Belongs to the BPG-independent phosphoglycerate mutase family. A-PGAM subfamily.

The enzyme catalyses (2R)-2-phosphoglycerate = (2R)-3-phosphoglycerate. It functions in the pathway carbohydrate degradation; glycolysis; pyruvate from D-glyceraldehyde 3-phosphate: step 3/5. In terms of biological role, catalyzes the interconversion of 2-phosphoglycerate and 3-phosphoglycerate. The protein is 2,3-bisphosphoglycerate-independent phosphoglycerate mutase 2 (apgM2) of Methanocaldococcus jannaschii (strain ATCC 43067 / DSM 2661 / JAL-1 / JCM 10045 / NBRC 100440) (Methanococcus jannaschii).